The following is a 177-amino-acid chain: Glia associated membrane protein glam-1 (177 aa).

Helical transmembrane passes span 19-39 (PLVV…FWMS), 42-62 (FGMA…LFGA), and 76-96 (VTFA…VVFA).

It localises to the membrane. This is Glia associated membrane protein glam-1 from Caenorhabditis elegans.